Reading from the N-terminus, the 171-residue chain is Protein-export protein SecB (171 aa).

The protein belongs to the SecB family. In terms of assembly, homotetramer, a dimer of dimers. One homotetramer interacts with 1 SecA dimer.

It localises to the cytoplasm. Functionally, one of the proteins required for the normal export of preproteins out of the cell cytoplasm. It is a molecular chaperone that binds to a subset of precursor proteins, maintaining them in a translocation-competent state. It also specifically binds to its receptor SecA. This Granulibacter bethesdensis (strain ATCC BAA-1260 / CGDNIH1) protein is Protein-export protein SecB.